The chain runs to 690 residues: Elongation factor G (690 aa).

The tr-type G domain occupies 8–283 (EYIRNIGICA…AVVGFLPSPI (276 aa)). Residues 17–24 (AHIDAGKT), 81–85 (DTPGH), and 135–138 (NKMD) contribute to the GTP site.

This sequence belongs to the TRAFAC class translation factor GTPase superfamily. Classic translation factor GTPase family. EF-G/EF-2 subfamily.

The protein localises to the cytoplasm. Catalyzes the GTP-dependent ribosomal translocation step during translation elongation. During this step, the ribosome changes from the pre-translocational (PRE) to the post-translocational (POST) state as the newly formed A-site-bound peptidyl-tRNA and P-site-bound deacylated tRNA move to the P and E sites, respectively. Catalyzes the coordinated movement of the two tRNA molecules, the mRNA and conformational changes in the ribosome. This chain is Elongation factor G, found in Rickettsia canadensis (strain McKiel).